A 236-amino-acid polypeptide reads, in one-letter code: Elastase-1 (236 aa).

In terms of domain architecture, Peptidase S1 spans 1 to 236 (VVGGRVAQPN…AYISWMNGIM (236 aa)). Cysteines 30 and 46 form a disulfide. The active-site Charge relay system is histidine 45. 5 residues coordinate Ca(2+): glutamate 59, asparagine 61, threonine 64, glutamate 66, and glutamate 69. Aspartate 93 functions as the Charge relay system in the catalytic mechanism. 3 cysteine pairs are disulfide-bonded: cysteine 127-cysteine 193, cysteine 158-cysteine 174, and cysteine 183-cysteine 213. The Charge relay system role is filled by serine 187.

It belongs to the peptidase S1 family. Elastase subfamily. The cofactor is Ca(2+). As to expression, pancreas.

It is found in the secreted. It carries out the reaction Hydrolysis of proteins, including elastin. Preferential cleavage: Ala-|-Xaa.. Functionally, acts upon elastin. This chain is Elastase-1, found in Salmo salar (Atlantic salmon).